We begin with the raw amino-acid sequence, 68 residues long: Conotoxin Cal14.13a (68 aa).

The N-terminal stretch at 1–21 is a signal peptide; sequence MKLCVVIVLLMLAMPFNGGEA. Residues 22–38 constitute a propeptide that is removed on maturation; sequence SRFFNQHARSQRSGMKT. V66 is subject to Valine amide.

Contains 2 disulfide bonds. As to expression, expressed by the venom duct.

It is found in the secreted. Functionally, probable neurotoxin with unknown target. Possibly targets ion channels. The sequence is that of Conotoxin Cal14.13a from Californiconus californicus (California cone).